We begin with the raw amino-acid sequence, 508 residues long: TATA box-binding protein-like 1 (508 aa).

Disordered stretches follow at residues 145–190, 236–262, and 456–479; these read QISY…QMHH, EPIPVKIEVPDVPPEGTSAANEEPMPD, and QKKRKRKAPVNRGPPIKRERFDDS.

Belongs to the TBP family.

The protein resides in the nucleus. May be a general transcription factor. Plays an essential role for RNA polymerase II/ama-1 transcription in early embryos whereby it activates a subset of RNA polymerase II promoters and facilitates the reestablishment of transcription after mitosis. This chain is TATA box-binding protein-like 1, found in Caenorhabditis elegans.